We begin with the raw amino-acid sequence, 326 residues long: Bifunctional pinoresinol-lariciresinol reductase (326 aa).

NADP(+) is bound by residues 25–31, Arg-50, and Lys-59; that span reads GGTGYLG. Lys-153 functions as the Proton acceptor in the catalytic mechanism. Arg-157 lines the NADP(+) pocket. His-285 serves as a coordination point for substrate.

The protein belongs to the NmrA-type oxidoreductase family. Isoflavone reductase subfamily. In terms of assembly, dimer.

It catalyses the reaction (+)-lariciresinol + NADP(+) = (+)-pinoresinol + NADPH + H(+). The catalysed reaction is (-)-secoisolariciresinol + NADP(+) = (+)-lariciresinol + NADPH + H(+). Functionally, reductase involved in lignan biosynthesis. Catalyzes the enantioselective conversion of (+)-pinoresinol into (+)-lariciresinol and of (+)-lariciresinol into (-)-secoisolariciresinol. Abstracts the 4R-hydride from the NADPH cofactor during catalysis. In Linum album (Flax), this protein is Bifunctional pinoresinol-lariciresinol reductase (PLR1).